Here is an 80-residue protein sequence, read N- to C-terminus: UPF0248 protein MJ1316 (80 aa).

Belongs to the UPF0248 family.

The sequence is that of UPF0248 protein MJ1316 from Methanocaldococcus jannaschii (strain ATCC 43067 / DSM 2661 / JAL-1 / JCM 10045 / NBRC 100440) (Methanococcus jannaschii).